A 608-amino-acid chain; its full sequence is Serine/threonine-protein kinase BUR1 (608 aa).

In terms of domain architecture, Protein kinase spans 39–346 (YEIIQKLGQG…ALDALNHNYF (308 aa)). ATP is bound by residues 45-53 (LGQGTFGVV) and Lys68. Catalysis depends on Asp174, which acts as the Proton acceptor. 2 disordered regions span residues 383–419 (HEAN…LALP) and 443–571 (YIPK…FDED). Over residues 400–411 (YNNSNNYPRNRN) the composition is skewed to low complexity. Over residues 471–482 (LRDRSPRREGHI) the composition is skewed to basic and acidic residues. The span at 487 to 502 (STTNSNNISSNSSASN) shows a compositional bias: low complexity. Polar residues-rich tracts occupy residues 503–512 (VGGTLSNPTH) and 539–548 (PQSSSRNVSD). Residues 559–571 (EQNESDLTDFDED) are compositionally biased toward acidic residues.

The protein belongs to the protein kinase superfamily. CMGC Ser/Thr protein kinase family. CDC2/CDKX subfamily.

It is found in the nucleus. The enzyme catalyses L-seryl-[protein] + ATP = O-phospho-L-seryl-[protein] + ADP + H(+). It carries out the reaction L-threonyl-[protein] + ATP = O-phospho-L-threonyl-[protein] + ADP + H(+). The catalysed reaction is [DNA-directed RNA polymerase] + ATP = phospho-[DNA-directed RNA polymerase] + ADP + H(+). Its function is as follows. Serine/threonine-protein kinase involved in transcription regulation. Phosphorylates the UBC2/RAD6 ubiquitin-conjugating enzyme (E2), leading to monoubiquitination of histone H2B and the silencing of telomeric-associated genes. Also required for histone H3 methylation. Necessary for the recovery from pheromone-induced growth arrest in the cell cycle G1 phase. The protein is Serine/threonine-protein kinase BUR1 (BUR1) of Debaryomyces hansenii (strain ATCC 36239 / CBS 767 / BCRC 21394 / JCM 1990 / NBRC 0083 / IGC 2968) (Yeast).